The chain runs to 342 residues: N-acetyl-gamma-glutamyl-phosphate reductase (342 aa).

The active site involves cysteine 149.

It belongs to the NAGSA dehydrogenase family. Type 1 subfamily.

The protein resides in the cytoplasm. It carries out the reaction N-acetyl-L-glutamate 5-semialdehyde + phosphate + NADP(+) = N-acetyl-L-glutamyl 5-phosphate + NADPH + H(+). The protein operates within amino-acid biosynthesis; L-arginine biosynthesis; N(2)-acetyl-L-ornithine from L-glutamate: step 3/4. Functionally, catalyzes the NADPH-dependent reduction of N-acetyl-5-glutamyl phosphate to yield N-acetyl-L-glutamate 5-semialdehyde. The protein is N-acetyl-gamma-glutamyl-phosphate reductase of Cereibacter sphaeroides (strain ATCC 17023 / DSM 158 / JCM 6121 / CCUG 31486 / LMG 2827 / NBRC 12203 / NCIMB 8253 / ATH 2.4.1.) (Rhodobacter sphaeroides).